Here is a 606-residue protein sequence, read N- to C-terminus: Neutral/alkaline invertase 3, chloroplastic (606 aa).

The transit peptide at 1-58 directs the protein to the chloroplast; sequence MGIAEVALHSMPGAFAAHSPASNLPLAADAARGRRRRSANSLHSSRALQGPVRFPGLR. A disordered region spans residues 97–126; it reads RVPGQAVGGNGSVNGSAAKPPPQRRKASSV.

It belongs to the glycosyl hydrolase 100 family.

The protein resides in the plastid. The protein localises to the chloroplast. The catalysed reaction is Hydrolysis of terminal non-reducing beta-D-fructofuranoside residues in beta-D-fructofuranosides.. In terms of biological role, mitochondrial invertase that cleaves sucrose into glucose and fructose. The protein is Neutral/alkaline invertase 3, chloroplastic of Oryza sativa subsp. japonica (Rice).